We begin with the raw amino-acid sequence, 339 residues long: Anthranilate phosphoribosyltransferase (339 aa).

5-phospho-alpha-D-ribose 1-diphosphate-binding positions include glycine 82, 85 to 86 (GD), 92 to 95 (NIST), 110 to 118 (KHGNSSISS), and serine 122. Residue glycine 82 participates in anthranilate binding. Serine 94 serves as a coordination point for Mg(2+). Anthranilate is bound at residue asparagine 113. An anthranilate-binding site is contributed by arginine 168. 2 residues coordinate Mg(2+): aspartate 227 and glutamate 228.

The protein belongs to the anthranilate phosphoribosyltransferase family. In terms of assembly, homodimer. The cofactor is Mg(2+).

It carries out the reaction N-(5-phospho-beta-D-ribosyl)anthranilate + diphosphate = 5-phospho-alpha-D-ribose 1-diphosphate + anthranilate. Its pathway is amino-acid biosynthesis; L-tryptophan biosynthesis; L-tryptophan from chorismate: step 2/5. Catalyzes the transfer of the phosphoribosyl group of 5-phosphorylribose-1-pyrophosphate (PRPP) to anthranilate to yield N-(5'-phosphoribosyl)-anthranilate (PRA). In Ruthia magnifica subsp. Calyptogena magnifica, this protein is Anthranilate phosphoribosyltransferase.